A 193-amino-acid polypeptide reads, in one-letter code: Small COPII coat GTPase SAR1 (193 aa).

Residues 3–5 (FLW) carry the STAR; SAR1-N-terminal activation recruitment. Required for the activation and subsequent recruitment to ER membrane motif. The mediates recruitment to ER membranes stretch occupies residues 11–15 (VLNML). D30 contributes to the Mg(2+) binding site. GDP is bound by residues N31, A32, G33, K34, T35, and T36. A GTP-binding site is contributed by N31. G33, K34, T35, and T36 together coordinate GTP. Position 71 (D71) interacts with Mg(2+). Positions 130, 131, 133, 176, and 177 each coordinate GDP. GTP-binding residues include N130, K131, D133, V176, and L177.

It belongs to the small GTPase superfamily. SAR1 family. In terms of assembly, homodimer; upon association with membrane. Part of the coat protein complex II/COPII, composed of SEC23/24 and SEC13/31 heterodimers, that it helps recruit and assemble on endoplasmic reticulum (ER) membranes at ER exit sites.

It localises to the endoplasmic reticulum membrane. Its subcellular location is the golgi apparatus. The protein resides in the golgi stack membrane. It is found in the cytoplasm. The protein localises to the cytosol. It carries out the reaction GTP + H2O = GDP + phosphate + H(+). Its activity is regulated as follows. Small GTPases activation is mediated by guanine exchange factors (GEF), while inactivation through hydrolysis of the bound GTP is stimulated by GTPase activating proteins (GAP). Functionally, small GTPase that cycles between an active GTP-bound and an inactive GDP-bound state and mainly functions in vesicle-mediated endoplasmic reticulum (ER) to Golgi transport. The active GTP-bound form inserts into the endoplasmic reticulum membrane where it recruits the remainder of the coat protein complex II/COPII. The coat protein complex II assembling and polymerizing on endoplasmic reticulum membrane is responsible for both the sorting of cargos and the deformation and budding of membranes into vesicles destined to the Golgi. Plays a role in transporting the tyrosine kinase receptor let-23 from the endoplasmic reticulum to the plasma membrane of vulval precursor cells. The polypeptide is Small COPII coat GTPase SAR1 (Caenorhabditis elegans).